Reading from the N-terminus, the 91-residue chain is UPF0250 protein Pfl01_4965 (91 aa).

The protein belongs to the UPF0250 family.

The polypeptide is UPF0250 protein Pfl01_4965 (Pseudomonas fluorescens (strain Pf0-1)).